Reading from the N-terminus, the 150-residue chain is MNVILLDKIANLGNLGDQVSVKAGYARNFLLPQGKAVVANESNVKVFEARRAELEAKLAAELAAANLRAEKITALEAVVIASKAGDEGKLFGSVGNRDIADAVTAAGVELAKSEVRLPLGALRTTGDFEVEVQLHTEVKAVVKVSVVAEA.

It belongs to the bacterial ribosomal protein bL9 family.

Binds to the 23S rRNA. The sequence is that of Large ribosomal subunit protein bL9 from Shewanella baltica (strain OS223).